Consider the following 197-residue polypeptide: Probable adenylyl-sulfate kinase (197 aa).

33–40 (GLSGSGKS) serves as a coordination point for ATP. Ser-107 acts as the Phosphoserine intermediate in catalysis.

The protein belongs to the APS kinase family.

It catalyses the reaction adenosine 5'-phosphosulfate + ATP = 3'-phosphoadenylyl sulfate + ADP + H(+). Its pathway is sulfur metabolism; hydrogen sulfide biosynthesis; sulfite from sulfate: step 2/3. Its function is as follows. Catalyzes the synthesis of activated sulfate. This chain is Probable adenylyl-sulfate kinase (cysC), found in Bacillus subtilis (strain 168).